The primary structure comprises 498 residues: Probable cytosol aminopeptidase (498 aa).

The Mn(2+) site is built by K271 and D276. K283 is an active-site residue. The Mn(2+) site is built by D294, D353, and E355. R357 is an active-site residue.

It belongs to the peptidase M17 family. Mn(2+) serves as cofactor.

The protein resides in the cytoplasm. It carries out the reaction Release of an N-terminal amino acid, Xaa-|-Yaa-, in which Xaa is preferably Leu, but may be other amino acids including Pro although not Arg or Lys, and Yaa may be Pro. Amino acid amides and methyl esters are also readily hydrolyzed, but rates on arylamides are exceedingly low.. The enzyme catalyses Release of an N-terminal amino acid, preferentially leucine, but not glutamic or aspartic acids.. In terms of biological role, presumably involved in the processing and regular turnover of intracellular proteins. Catalyzes the removal of unsubstituted N-terminal amino acids from various peptides. This Bordetella petrii (strain ATCC BAA-461 / DSM 12804 / CCUG 43448) protein is Probable cytosol aminopeptidase.